Reading from the N-terminus, the 289-residue chain is ATP synthase mitochondrial F1 complex assembly factor 2 (289 aa).

Residues 1–40 (MWRSCLRLRDGGRRLLNRPAGGPSASMSPGPTIPSPARAY) constitute a mitochondrion transit peptide. Positions 13–40 (RRLLNRPAGGPSASMSPGPTIPSPARAY) are disordered. Position 133 is an N6-succinyllysine (lysine 133).

Belongs to the ATP12 family. As to quaternary structure, interacts with ATP5F1B; involved in the assembly of the F1 component of the mitochondrial ATP synthase (ATPase). Interacts with FMC1. Widely expressed.

It is found in the mitochondrion inner membrane. Its function is as follows. Plays a role in the assembly of the F1 component of the mitochondrial ATP synthase (ATPase). The sequence is that of ATP synthase mitochondrial F1 complex assembly factor 2 from Homo sapiens (Human).